We begin with the raw amino-acid sequence, 122 residues long: Large ribosomal subunit protein uL14 (122 aa).

Belongs to the universal ribosomal protein uL14 family. Part of the 50S ribosomal subunit. Forms a cluster with proteins L3 and L19. In the 70S ribosome, L14 and L19 interact and together make contacts with the 16S rRNA in bridges B5 and B8.

Functionally, binds to 23S rRNA. Forms part of two intersubunit bridges in the 70S ribosome. This Nitrosomonas eutropha (strain DSM 101675 / C91 / Nm57) protein is Large ribosomal subunit protein uL14.